We begin with the raw amino-acid sequence, 435 residues long: GTPase Der (435 aa).

2 EngA-type G domains span residues 4-167 (PVVA…PAEK) and 175-350 (ISFS…DNQN). GTP contacts are provided by residues 10 to 17 (GQPNVGKS), 57 to 61 (DTGGI), 119 to 122 (NKAD), 181 to 188 (GRPNVGKS), 228 to 232 (DTAGI), and 293 to 296 (NKWD). Residues 351 to 435 (QRIQSSVLND…PIKILPRKRK (85 aa)) enclose the KH-like domain.

The protein belongs to the TRAFAC class TrmE-Era-EngA-EngB-Septin-like GTPase superfamily. EngA (Der) GTPase family. Associates with the 50S ribosomal subunit.

Its function is as follows. GTPase that plays an essential role in the late steps of ribosome biogenesis. This is GTPase Der from Lactobacillus acidophilus (strain ATCC 700396 / NCK56 / N2 / NCFM).